A 349-amino-acid chain; its full sequence is Putative transport protein YhhT (349 aa).

Residues 1–10 (METPQPDKTG) are Cytoplasmic-facing. The chain crosses the membrane as a helical span at residues 11–31 (MHILLKLASLVVILAGIHAAA). Position 32 (Asp-32) is a topological domain, periplasmic. A helical membrane pass occupies residues 33–53 (IIVQLLLALFFAIVLNPLVTW). The Cytoplasmic segment spans residues 54 to 62 (FIRRGVQRP). The helical transmembrane segment at 63–83 (VAITIVVVVMLIALTALVGVL) threads the bilayer. Residues 84-142 (AASFNEFISMLPKFNKELTRKLFKLQEMLPFLNLHMSPERMLQRMDSEKVVTFTTALMT) lie on the Periplasmic side of the membrane. The chain crosses the membrane as a helical span at residues 143–163 (GLSGAMASVLLLVMTVVFMLF). The Cytoplasmic portion of the chain corresponds to 164 to 208 (EVRHVPYKMRFALNNPQIHIAGLHRALKGVSHYLALKTLLSLWTG). A helical membrane pass occupies residues 209 to 229 (VIVWLGLELMGVQFALMWAVL). Residues 230 to 234 (AFLLN) are Periplasmic-facing. A helical transmembrane segment spans residues 235–255 (YVPNIGAVISAVPPMIQVLLF). The Cytoplasmic portion of the chain corresponds to 256–257 (NG). The helical transmembrane segment at 258-278 (VYECILVGALFLVVHMVIGNI) threads the bilayer. Topologically, residues 279–292 (LEPRMMGHRLGMST) are periplasmic. Residues 293 to 313 (MVVFLSLLIWGWLLGPVGMLL) traverse the membrane as a helical segment. The Cytoplasmic segment spans residues 314 to 349 (SVPLTSVCKIWMETTKGGSKLAILLGPGRPKSRLPG).

This sequence belongs to the autoinducer-2 exporter (AI-2E) (TC 2.A.86) family.

It localises to the cell inner membrane. The sequence is that of Putative transport protein YhhT (yhhT) from Escherichia coli O157:H7.